Here is a 764-residue protein sequence, read N- to C-terminus: 1,4-alpha-glucan branching enzyme GlgB (764 aa).

Asp431 (nucleophile) is an active-site residue. The Proton donor role is filled by Glu484.

Belongs to the glycosyl hydrolase 13 family. GlgB subfamily. In terms of assembly, monomer.

The catalysed reaction is Transfers a segment of a (1-&gt;4)-alpha-D-glucan chain to a primary hydroxy group in a similar glucan chain.. The protein operates within glycan biosynthesis; glycogen biosynthesis. Catalyzes the formation of the alpha-1,6-glucosidic linkages in glycogen by scission of a 1,4-alpha-linked oligosaccharide from growing alpha-1,4-glucan chains and the subsequent attachment of the oligosaccharide to the alpha-1,6 position. The chain is 1,4-alpha-glucan branching enzyme GlgB from Synechococcus sp. (strain CC9902).